A 422-amino-acid chain; its full sequence is UDP-N-acetylglucosamine 1-carboxyvinyltransferase (422 aa).

22-23 provides a ligand contact to phosphoenolpyruvate; the sequence is KN. Arg-95 provides a ligand contact to UDP-N-acetyl-alpha-D-glucosamine. The Proton donor role is filled by Cys-119. Residue Cys-119 is modified to 2-(S-cysteinyl)pyruvic acid O-phosphothioketal. Residues 124–128, Asp-309, and Val-331 each bind UDP-N-acetyl-alpha-D-glucosamine; that span reads RPIDQ.

The protein belongs to the EPSP synthase family. MurA subfamily.

Its subcellular location is the cytoplasm. It carries out the reaction phosphoenolpyruvate + UDP-N-acetyl-alpha-D-glucosamine = UDP-N-acetyl-3-O-(1-carboxyvinyl)-alpha-D-glucosamine + phosphate. It participates in cell wall biogenesis; peptidoglycan biosynthesis. Functionally, cell wall formation. Adds enolpyruvyl to UDP-N-acetylglucosamine. The protein is UDP-N-acetylglucosamine 1-carboxyvinyltransferase of Anaeromyxobacter sp. (strain Fw109-5).